A 1484-amino-acid polypeptide reads, in one-letter code: Chromosome partition protein MukB (1484 aa).

ATP is bound at residue 34 to 41; the sequence is GGNGAGKS. Coiled coils occupy residues 338–415, 496–604, 781–805, 835–868, 903–1115, and 1206–1265; these read NLVQ…RAIQ, QTAR…ALAW, AARE…ATLS, EAEM…HYDQ, HDAQ…SAKA, and DDPV…LQAV. The tract at residues 666–783 is flexible hinge; that stretch reads PGGTDDARLT…AVPLFGRAAR (118 aa).

Belongs to the SMC family. MukB subfamily. Homodimerization via its hinge domain. Binds to DNA via its C-terminal region. Interacts, and probably forms a ternary complex, with MukE and MukF via its C-terminal region. The complex formation is stimulated by calcium or magnesium. Interacts with tubulin-related protein FtsZ.

Its subcellular location is the cytoplasm. The protein resides in the nucleoid. Functionally, plays a central role in chromosome condensation, segregation and cell cycle progression. Functions as a homodimer, which is essential for chromosome partition. Involved in negative DNA supercoiling in vivo, and by this means organize and compact chromosomes. May achieve or facilitate chromosome segregation by condensation DNA from both sides of a centrally located replisome during cell division. In Sodalis glossinidius (strain morsitans), this protein is Chromosome partition protein MukB.